Reading from the N-terminus, the 78-residue chain is UPF0349 protein BLi03401/BL03152 (78 aa).

Belongs to the UPF0349 family.

This is UPF0349 protein BLi03401/BL03152 from Bacillus licheniformis (strain ATCC 14580 / DSM 13 / JCM 2505 / CCUG 7422 / NBRC 12200 / NCIMB 9375 / NCTC 10341 / NRRL NRS-1264 / Gibson 46).